A 309-amino-acid polypeptide reads, in one-letter code: SUR7 family protein FMP45 (309 aa).

Over 1-5 (MIFKR) the chain is Cytoplasmic. The helical transmembrane segment at 6–26 (FVNLLVFLFLLGAGLLTFFLI) threads the bilayer. The Extracellular portion of the chain corresponds to 27–116 (LSGGRESGTL…YYLSRVGWAM (90 aa)). Residue N73 is glycosylated (N-linked (GlcNAc...) asparagine). The chain crosses the membrane as a helical span at residues 117–137 (LLISLFFIVLALVPGFLATFL). Residues 138–140 (PFK) lie on the Cytoplasmic side of the membrane. The helical transmembrane segment at 141-161 (AVPVLYCVLSWLAFFFIILAA) threads the bilayer. Topologically, residues 162–188 (CLYTGCYVKARKTFRNSGRSARLGPKN) are extracellular. The chain crosses the membrane as a helical span at residues 189 to 209 (FAFIWTSVFLMLVNAIWSTIF). Over 210 to 309 (SATHKAHSTY…GLAGPVTVRD (100 aa)) the chain is Cytoplasmic. 2 positions are modified to phosphoserine: S230 and S232. T235 carries the post-translational modification Phosphothreonine. Residues 253–309 (GPITAAPVVGQPQPTTTTTPAGNGKFFQKLKTRKQVPSAELEPAGDGGLAGPVTVRD) are disordered. A compositionally biased stretch (low complexity) spans 258 to 274 (APVVGQPQPTTTTTPAG).

The protein belongs to the SUR7 family.

It is found in the cell membrane. Its function is as follows. Involved in sporulation and affects the sphingolipid composition of the plasma membrane. The polypeptide is SUR7 family protein FMP45 (FMP45) (Saccharomyces cerevisiae (strain ATCC 204508 / S288c) (Baker's yeast)).